The chain runs to 100 residues: NADH-quinone oxidoreductase subunit K 1 (100 aa).

3 helical membrane-spanning segments follow: residues 4–24 (LHSY…GVLV), 29–49 (IVIF…FIAL), and 60–80 (IFVF…LALM).

Belongs to the complex I subunit 4L family. In terms of assembly, NDH-1 is composed of 14 different subunits. Subunits NuoA, H, J, K, L, M, N constitute the membrane sector of the complex.

It is found in the cell inner membrane. The enzyme catalyses a quinone + NADH + 5 H(+)(in) = a quinol + NAD(+) + 4 H(+)(out). In terms of biological role, NDH-1 shuttles electrons from NADH, via FMN and iron-sulfur (Fe-S) centers, to quinones in the respiratory chain. The immediate electron acceptor for the enzyme in this species is believed to be ubiquinone. Couples the redox reaction to proton translocation (for every two electrons transferred, four hydrogen ions are translocated across the cytoplasmic membrane), and thus conserves the redox energy in a proton gradient. The protein is NADH-quinone oxidoreductase subunit K 1 of Geobacter sulfurreducens (strain ATCC 51573 / DSM 12127 / PCA).